A 471-amino-acid chain; its full sequence is Phosphatidate cytidylyltransferase 3 (471 aa).

A disordered region spans residues M1–A72. The segment covering S21–Q35 has biased composition (polar residues). 8 helical membrane-spanning segments follow: residues W97–M116, Y120–L139, L149–G169, Y196–L216, Y228–F250, W255–F277, G293–G313, and F368–F388.

The protein belongs to the CDS family. It depends on Mg(2+) as a cofactor.

The protein localises to the membrane. The catalysed reaction is a 1,2-diacyl-sn-glycero-3-phosphate + CTP + H(+) = a CDP-1,2-diacyl-sn-glycerol + diphosphate. It functions in the pathway phospholipid metabolism; CDP-diacylglycerol biosynthesis; CDP-diacylglycerol from sn-glycerol 3-phosphate: step 3/3. Functionally, may be involved in the synthesis of minor phospholipids and in modulation of IP3-mediated signal transduction. The protein is Phosphatidate cytidylyltransferase 3 of Arabidopsis thaliana (Mouse-ear cress).